Consider the following 326-residue polypeptide: Endo-beta-1,4-glucanase A (326 aa).

Residues 1 to 19 form the signal peptide; the sequence is MRSLVLLSSVLALVAPSKG. E150 serves as the catalytic Proton donor. Catalysis depends on E257, which acts as the Nucleophile.

Belongs to the glycosyl hydrolase 5 (cellulase A) family.

The protein resides in the secreted. It catalyses the reaction Endohydrolysis of (1-&gt;4)-beta-D-glucosidic linkages in cellulose, lichenin and cereal beta-D-glucans.. Its function is as follows. Has endoglucanase activity on substrates containing beta-1,4 glycosidic bonds, like in carboxymethylcellulose (CMC), hydroxyethylcellulose (HEC) and beta-glucan. Involved in the degradation of complex natural cellulosic substrates. In Emericella nidulans (strain FGSC A4 / ATCC 38163 / CBS 112.46 / NRRL 194 / M139) (Aspergillus nidulans), this protein is Endo-beta-1,4-glucanase A (eglA).